We begin with the raw amino-acid sequence, 239 residues long: Fatty acid metabolism regulator protein (239 aa).

Positions 6 to 74 (QSPAGFAEEY…HGKPTKVNNF (69 aa)) constitute an HTH gntR-type domain. Positions 34-53 (ERELSELIGVTRTTLREVLQ) form a DNA-binding region, H-T-H motif.

As to quaternary structure, homodimer.

The protein localises to the cytoplasm. Its function is as follows. Multifunctional regulator of fatty acid metabolism. The protein is Fatty acid metabolism regulator protein of Cronobacter sakazakii (strain ATCC BAA-894) (Enterobacter sakazakii).